The chain runs to 369 residues: Phosphate-binding protein PstS 3 (369 aa).

Residues 1-21 form the signal peptide; that stretch reads MKLNQFGAAIGLLATGALLSG. The N-palmitoyl cysteine moiety is linked to residue C22. Residue C22 is the site of S-diacylglycerol cysteine attachment. Phosphate is bound by residues 55-57, S85, D103, and 190-192; these read STA and SGT.

This sequence belongs to the PstS family. As to quaternary structure, the complex is composed of two ATP-binding proteins (PstB), two transmembrane proteins (PstC and PstA) and a solute-binding protein (PstS).

It is found in the cell membrane. Functionally, part of the ABC transporter complex PstSACB involved in phosphate import. This is Phosphate-binding protein PstS 3 (pstS2) from Mycobacterium leprae (strain TN).